The following is a 379-amino-acid chain: Alcohol dehydrogenase 2 (379 aa).

Positions 47, 49, 69, 99, 102, 105, 113, and 177 each coordinate Zn(2+). Residues T49 and H69 each contribute to the an alcohol site. T49 is a binding site for NAD(+). NAD(+)-binding positions include 202 to 207 (GLGAVG), D226, K231, T272, V295, 295 to 297 (VGV), F322, and R372.

It belongs to the zinc-containing alcohol dehydrogenase family. Homodimer. It depends on Zn(2+) as a cofactor.

It is found in the cytoplasm. The enzyme catalyses a primary alcohol + NAD(+) = an aldehyde + NADH + H(+). It carries out the reaction a secondary alcohol + NAD(+) = a ketone + NADH + H(+). The polypeptide is Alcohol dehydrogenase 2 (ADH2) (Oryza sativa subsp. indica (Rice)).